A 92-amino-acid chain; its full sequence is Small ribosomal subunit protein uS19 (92 aa).

This sequence belongs to the universal ribosomal protein uS19 family.

Protein S19 forms a complex with S13 that binds strongly to the 16S ribosomal RNA. The sequence is that of Small ribosomal subunit protein uS19 from Corynebacterium jeikeium (strain K411).